The following is a 73-amino-acid chain: Large ribosomal subunit protein bL31 (73 aa).

It belongs to the bacterial ribosomal protein bL31 family. Type A subfamily. As to quaternary structure, part of the 50S ribosomal subunit.

In terms of biological role, binds the 23S rRNA. This Bartonella tribocorum (strain CIP 105476 / IBS 506) protein is Large ribosomal subunit protein bL31.